The primary structure comprises 338 residues: Flap endonuclease 1 (338 aa).

The segment at 1–98 is N-domain; it reads MGTDIGDLLQ…ETLNRRKEVR (98 aa). The Mg(2+) site is built by D27, D80, E152, E154, D173, D175, and D236. The tract at residues 116–257 is I-domain; that stretch reads AAYKYAQASS…TALKLIKKHG (142 aa). The interaction with PCNA stretch occupies residues 330–338; it reads RQQTLDQWF.

It belongs to the XPG/RAD2 endonuclease family. FEN1 subfamily. As to quaternary structure, interacts with PCNA. PCNA stimulates the nuclease activity without altering cleavage specificity. It depends on Mg(2+) as a cofactor.

Functionally, structure-specific nuclease with 5'-flap endonuclease and 5'-3' exonuclease activities involved in DNA replication and repair. During DNA replication, cleaves the 5'-overhanging flap structure that is generated by displacement synthesis when DNA polymerase encounters the 5'-end of a downstream Okazaki fragment. Binds the unpaired 3'-DNA end and kinks the DNA to facilitate 5' cleavage specificity. Cleaves one nucleotide into the double-stranded DNA from the junction in flap DNA, leaving a nick for ligation. Also involved in the base excision repair (BER) pathway. Acts as a genome stabilization factor that prevents flaps from equilibrating into structures that lead to duplications and deletions. Also possesses 5'-3' exonuclease activity on nicked or gapped double-stranded DNA. This chain is Flap endonuclease 1, found in Methanosarcina barkeri (strain Fusaro / DSM 804).